Here is a 67-residue protein sequence, read N- to C-terminus: DNA-directed RNA polymerase subunit omega (67 aa).

This sequence belongs to the RNA polymerase subunit omega family. In terms of assembly, the RNAP catalytic core consists of 2 alpha, 1 beta, 1 beta' and 1 omega subunit. When a sigma factor is associated with the core the holoenzyme is formed, which can initiate transcription.

The enzyme catalyses RNA(n) + a ribonucleoside 5'-triphosphate = RNA(n+1) + diphosphate. Its function is as follows. Promotes RNA polymerase assembly. Latches the N- and C-terminal regions of the beta' subunit thereby facilitating its interaction with the beta and alpha subunits. This chain is DNA-directed RNA polymerase subunit omega, found in Bacillus velezensis (strain DSM 23117 / BGSC 10A6 / LMG 26770 / FZB42) (Bacillus amyloliquefaciens subsp. plantarum).